Consider the following 359-residue polypeptide: Putative cyclin-F1-2 (359 aa).

Belongs to the cyclin family. Cyclin F subfamily.

In Oryza sativa subsp. japonica (Rice), this protein is Putative cyclin-F1-2 (CYCF1-2).